Reading from the N-terminus, the 183-residue chain is Dual-action ribosomal maturation protein DarP (183 aa).

The protein belongs to the DarP family.

It localises to the cytoplasm. Its function is as follows. Member of a network of 50S ribosomal subunit biogenesis factors which assembles along the 30S-50S interface, preventing incorrect 23S rRNA structures from forming. Promotes peptidyl transferase center (PTC) maturation. In Salmonella paratyphi A (strain ATCC 9150 / SARB42), this protein is Dual-action ribosomal maturation protein DarP.